A 1043-amino-acid chain; its full sequence is tRNA wybutosine-synthesizing protein 2/3/4 (1043 aa).

The tract at residues 1–233 is tRNA wybutosine-synthesizing protein 3 homolog; it reads MEFDRRKAAA…PVLQNGAKHG (233 aa). Residues 53 to 75 form a disordered region; the sequence is RVSVLAQPPPPQQADPGGAKTKK. Kelch repeat units lie at residues 360 to 410, 412 to 460, 461 to 510, and 512 to 559; these read DIYV…AVDR, VYVF…SYGS, KLFL…IYKD, and LGIL…VIID. The tract at residues 700–1041 is tRNA wybutosine-synthesizing protein 2 homolog; it reads QPDDSCVFEE…RHLVVDVKCR (342 aa). Residues Lys-874 and 942 to 943 each bind S-adenosyl-L-methionine; that span reads DN.

In the C-terminal section; belongs to the class I-like SAM-binding methyltransferase superfamily. TRM5/TYW2 family. This sequence in the N-terminal section; belongs to the TYW3 family.

The catalysed reaction is 4-demethyl-7-[(3S)-3-amino-3-carboxypropyl]wyosine(37) in tRNA(Phe) + S-adenosyl-L-methionine = 7-[(3S)-3-amino-3-carboxypropyl]wyosine(37) in tRNA(Phe) + S-adenosyl-L-homocysteine + H(+). It catalyses the reaction 4-demethylwyosine(37) in tRNA(Phe) + S-adenosyl-L-methionine = 4-demethyl-7-[(3S)-3-amino-3-carboxypropyl]wyosine(37) in tRNA(Phe) + S-methyl-5'-thioadenosine + H(+). Its pathway is tRNA modification; wybutosine-tRNA(Phe) biosynthesis. Its function is as follows. S-adenosyl-L-methionine-dependent transferase that acts as a component of the wybutosine biosynthesis pathway. Wybutosine is a hyper modified guanosine with a tricyclic base found at the 3'-position adjacent to the anticodon of eukaryotic phenylalanine tRNA. This is tRNA wybutosine-synthesizing protein 2/3/4 from Oryza sativa subsp. japonica (Rice).